A 436-amino-acid polypeptide reads, in one-letter code: 3-ketoacyl-CoA thiolase (436 aa).

The Acyl-thioester intermediate role is filled by Cys-99. Catalysis depends on proton acceptor residues His-392 and Cys-422.

It belongs to the thiolase-like superfamily. Thiolase family. As to quaternary structure, heterotetramer of two alpha chains (FadJ) and two beta chains (FadI).

The protein localises to the cytoplasm. The enzyme catalyses an acyl-CoA + acetyl-CoA = a 3-oxoacyl-CoA + CoA. The protein operates within lipid metabolism; fatty acid beta-oxidation. Catalyzes the final step of fatty acid oxidation in which acetyl-CoA is released and the CoA ester of a fatty acid two carbons shorter is formed. In Shigella boydii serotype 18 (strain CDC 3083-94 / BS512), this protein is 3-ketoacyl-CoA thiolase.